The chain runs to 353 residues: UPF0283 membrane protein YcjF (353 aa).

Positions 1 to 19 (MSEPLKPRIDFAEPLKEES) are enriched in basic and acidic residues. Residues 1–29 (MSEPLKPRIDFAEPLKEESTSTFKAQQTF) form a disordered region. Residues 20-29 (TSTFKAQQTF) are compositionally biased toward polar residues. 3 helical membrane-spanning segments follow: residues 70-90 (MVLG…IQWT), 100-120 (AALG…GSVI), and 213-233 (ESTL…FIAW).

It belongs to the UPF0283 family.

The protein localises to the cell inner membrane. The protein is UPF0283 membrane protein YcjF of Salmonella arizonae (strain ATCC BAA-731 / CDC346-86 / RSK2980).